We begin with the raw amino-acid sequence, 220 residues long: Tegument protein UL51 homolog (220 aa).

Cys-11 is lipidated: S-palmitoyl cysteine; by host.

Belongs to the herpesviridae UL51 family. Oligomerizes. Interacts with UL7 homolog; this interaction mediates UL7 homolog incorporation to virions. Phosphorylated. In terms of processing, palmitoylation is necessary for Golgi localization.

It localises to the virion tegument. The protein localises to the host cytoplasm. Its subcellular location is the host Golgi apparatus. In terms of biological role, plays several roles during the time course of infection, including egress of virus particles from the perinuclear space and secondary envelopment of cytoplasmic capsids that bud into specific trans-Golgi network (TGN)-derived membranes. In Connochaetes taurinus (Blue wildebeest), this protein is Tegument protein UL51 homolog (55).